Reading from the N-terminus, the 701-residue chain is Coiled-coil domain-containing protein 62 (701 aa).

Coiled-coil stretches lie at residues 61-197 (ETST…LQAR) and 241-342 (TCVV…QFLN). The disordered stretch occupies residues 624–652 (KSAEREEESAALPDRRTSANEKDDFSPTS). The span at 636 to 648 (PDRRTSANEKDDF) shows a compositional bias: basic and acidic residues. 2 consecutive short sequence motifs (LXXLL motif) follow at residues 654–658 (LQRLL) and 670–674 (LSTLL).

As to quaternary structure, interacts with ESR1 and ESR2 in the presence of estradiol/E2. The interaction with ESR2 recruits CCDC62 to ER target genes, including cyclin-D1/CCND1 AP-1 promoter. Interacts with GOPC. As to expression, highly expressed in testis, not detected in other tissues (at protein level). Expressed at low levels in the epididymis, lung, spleen, bladder, kidney, liver, muscle.

It localises to the cytoplasm. The protein resides in the nucleus. Its subcellular location is the cytoplasmic vesicle. It is found in the secretory vesicle. The protein localises to the acrosome. Nuclear receptor coactivator that can enhance preferentially estrogen receptors ESR1 and ESR2 transactivation. Also modulates progesterone/PGR, glucocorticoid/NR3C1 and androgen/AR receptors transactivation, although at lower level; little effect on vitamin D receptor/VDR. Required for normal spermiogenesis. It probably plays a role in acrosome formation. This chain is Coiled-coil domain-containing protein 62 (Ccdc62), found in Mus musculus (Mouse).